We begin with the raw amino-acid sequence, 132 residues long: Small ribosomal subunit protein eS12 (132 aa).

At Ala-2 the chain carries N-acetylalanine. Lys-129 carries the post-translational modification N6-succinyllysine.

It belongs to the eukaryotic ribosomal protein eS12 family. As to quaternary structure, part of the small subunit (SSU) processome, composed of more than 70 proteins and the RNA chaperone small nucleolar RNA (snoRNA) U3. Subunit of the 40S ribosomal complex.

The protein localises to the nucleus. It localises to the nucleolus. In terms of biological role, part of the small subunit (SSU) processome, first precursor of the small eukaryotic ribosomal subunit. During the assembly of the SSU processome in the nucleolus, many ribosome biogenesis factors, an RNA chaperone and ribosomal proteins associate with the nascent pre-rRNA and work in concert to generate RNA folding, modifications, rearrangements and cleavage as well as targeted degradation of pre-ribosomal RNA by the RNA exosome. Subunit of the 40S ribosomal complex. The chain is Small ribosomal subunit protein eS12 (Rps12) from Rattus norvegicus (Rat).